We begin with the raw amino-acid sequence, 1181 residues long: Poly [ADP-ribose] polymerase tankyrase (1181 aa).

ANK repeat units follow at residues 56-85 (RKST…SIQA), 89-118 (GGLH…SPNT), 122-151 (WNYT…NHTI), 209-238 (RRST…DVHA), 242-271 (GGLV…NVNA), 275-304 (WAFT…DPTL), 362-394 (TGDT…LLNE), 398-427 (AFLT…KVNA), 431-458 (LGQT…DTNI), 483-513 (DSET…SVNC), 519-548 (RHST…EVYA), 552-581 (GGLV…NVNV), 585-614 (WKFT…DPMK), 638-668 (RGPS…NCRD), 672-701 (RNST…DVNA), 705-734 (GGLI…VVNA), 738-767 (WGFT…DAYM), and 771-799 (EGQT…LSQQ). Disordered regions lie at residues 807-834 (SLTS…SAIL) and 864-886 (RISP…DLLP). In terms of domain architecture, SAM spans 889 to 952 (DTITNVSGFL…LKGIAQLRST (64 aa)). The 206-residue stretch at 969–1174 (LPDDKEFVAV…YQIVKPDDSS (206 aa)) folds into the PARP catalytic domain. Zn(2+) contacts are provided by C1091, H1094, C1099, and C1102.

The protein belongs to the ARTD/PARP family. As to quaternary structure, interacts (via ANK repeats) with PI31.

The enzyme catalyses NAD(+) + (ADP-D-ribosyl)n-acceptor = nicotinamide + (ADP-D-ribosyl)n+1-acceptor + H(+).. The catalysed reaction is L-aspartyl-[protein] + NAD(+) = 4-O-(ADP-D-ribosyl)-L-aspartyl-[protein] + nicotinamide. It carries out the reaction L-glutamyl-[protein] + NAD(+) = 5-O-(ADP-D-ribosyl)-L-glutamyl-[protein] + nicotinamide. Functionally, stimulates proteasome activity, probably by ADP-ribosylation of PI31. Modulates 26S proteasome assembly. The sequence is that of Poly [ADP-ribose] polymerase tankyrase from Drosophila melanogaster (Fruit fly).